The primary structure comprises 143 residues: Large ribosomal subunit protein uL15 (143 aa).

Basic residues-rich tracts occupy residues 1 to 14 (MIRKSKKITKKRGS) and 23 to 38 (KKHRGAGHRGGRGNAG). The tract at residues 1 to 38 (MIRKSKKITKKRGSRTCGYGEAKKHRGAGHRGGRGNAG) is disordered.

Belongs to the universal ribosomal protein uL15 family. Part of the 50S ribosomal subunit.

In terms of biological role, binds to the 23S rRNA. This Methanococcus maripaludis (strain DSM 14266 / JCM 13030 / NBRC 101832 / S2 / LL) protein is Large ribosomal subunit protein uL15.